We begin with the raw amino-acid sequence, 412 residues long: Tyrosine--tRNA ligase (412 aa).

Positions 48–57 (PSRPDLHLGH) match the 'HIGH' region motif. The 'KMSKS' region signature appears at 232 to 236 (KMSKS). Lys-235 lines the ATP pocket. The region spanning 342–405 (VGLLNLMRHA…GKRRFARIRP (64 aa)) is the S4 RNA-binding domain.

This sequence belongs to the class-I aminoacyl-tRNA synthetase family. TyrS type 2 subfamily. Homodimer.

It localises to the cytoplasm. The catalysed reaction is tRNA(Tyr) + L-tyrosine + ATP = L-tyrosyl-tRNA(Tyr) + AMP + diphosphate + H(+). Its function is as follows. Catalyzes the attachment of tyrosine to tRNA(Tyr) in a two-step reaction: tyrosine is first activated by ATP to form Tyr-AMP and then transferred to the acceptor end of tRNA(Tyr). This chain is Tyrosine--tRNA ligase, found in Salinibacter ruber (strain DSM 13855 / M31).